Here is a 772-residue protein sequence, read N- to C-terminus: Heat shock protein 88 (772 aa).

2 disordered regions span residues 496–519 and 729–772; these read TAAPAETPAETPANGEAAKPAEEK and LGKP…DILD. Low complexity predominate over residues 497-513; it reads AAPAETPAETPANGEAA. Positions 735–772 are enriched in basic and acidic residues; the sequence is KPVEVPKEEPKDTPMESKDAPAEEPVATKDQKMDDILD.

The protein belongs to the heat shock protein 70 family.

In terms of biological role, may function in protein folding and assembly, and disassembly of protein complexes. In Dictyostelium discoideum (Social amoeba), this protein is Heat shock protein 88 (hspH).